A 251-amino-acid polypeptide reads, in one-letter code: uncharacterized protein (251 aa).

The signal sequence occupies residues Met-1–Gly-25. Cys-26 carries N-palmitoyl cysteine lipidation. A lipid anchor (S-diacylglycerol cysteine) is attached at Cys-26. The region spanning Ser-40 to Leu-84 is the LysM domain. Over residues Thr-93–Ala-112 the composition is skewed to low complexity. The tract at residues Thr-93 to Lys-115 is disordered.

It belongs to the peptidase M23B family.

It is found in the cell inner membrane. This is an uncharacterized protein from Escherichia coli (strain K12).